The chain runs to 195 residues: MSDEDRTDRATEDHTIFDRGVGQRDQLQRLWTPYRMNYLAEAPVKRDPNSSASPAQPFTEIPQLSDEEGLVVARGKLVYAVLNLYPYNPGHLMVVPYRRVSELEDLTDLESAELMAFTQKAIRVIKNVSRPHGFNVGLNLGTSAGGSLAEHLHVHVVPRWGGDANFITIIGGSKVIPQLLRDTRRLLATEWARQP.

Residues 1–17 (MSDEDRTDRATEDHTIF) are compositionally biased toward basic and acidic residues. The segment at 1-20 (MSDEDRTDRATEDHTIFDRG) is disordered. The 110-residue stretch at 57-166 (PFTEIPQLSD…VPRWGGDANF (110 aa)) folds into the HIT domain. The Histidine triad motif motif lies at 151–155 (HLHVH). Histidine 153 (tele-AMP-histidine intermediate) is an active-site residue.

Homotetramer. A divalent metal cation is required as a cofactor.

It carries out the reaction ADP + ATP + H(+) = P(1),P(4)-bis(5'-adenosyl) tetraphosphate + phosphate. Catabolizes diadenosine 5',5'''-P1,P4-tetraphosphate (Ap4A) into ADP and ATP. The sequence is that of AP-4-A phosphorylase from Mycobacterium tuberculosis (strain CDC 1551 / Oshkosh).